The sequence spans 75 residues: UPF0270 protein PFLU_4323 (75 aa).

It belongs to the UPF0270 family.

The sequence is that of UPF0270 protein PFLU_4323 from Pseudomonas fluorescens (strain SBW25).